Here is a 457-residue protein sequence, read N- to C-terminus: Bifunctional protein GlmU (457 aa).

A pyrophosphorylase region spans residues 1 to 236 (MDQDACTHSA…DWHFLGVNTP (236 aa)). UDP-N-acetyl-alpha-D-glucosamine contacts are provided by residues 14 to 17 (LAAG), Lys28, Gln79, and 84 to 85 (GT). Asp110 is a binding site for Mg(2+). 4 residues coordinate UDP-N-acetyl-alpha-D-glucosamine: Gly145, Glu159, Asn176, and Asn234. Asn234 contributes to the Mg(2+) binding site. Positions 237 to 257 (KDLSYVESIQQAFIIEKLLQS) are linker. Positions 258–457 (GVIIHSPESV…GKQKNFSKRK (200 aa)) are N-acetyltransferase. Arg340 and Lys358 together coordinate UDP-N-acetyl-alpha-D-glucosamine. Residue His370 is the Proton acceptor of the active site. Positions 373 and 384 each coordinate UDP-N-acetyl-alpha-D-glucosamine. Acetyl-CoA-binding positions include Ala387, 393–394 (NY), Ser412, Ala430, and Arg447.

It in the N-terminal section; belongs to the N-acetylglucosamine-1-phosphate uridyltransferase family. In the C-terminal section; belongs to the transferase hexapeptide repeat family. In terms of assembly, homotrimer. Mg(2+) is required as a cofactor.

It is found in the cytoplasm. The enzyme catalyses alpha-D-glucosamine 1-phosphate + acetyl-CoA = N-acetyl-alpha-D-glucosamine 1-phosphate + CoA + H(+). It catalyses the reaction N-acetyl-alpha-D-glucosamine 1-phosphate + UTP + H(+) = UDP-N-acetyl-alpha-D-glucosamine + diphosphate. It participates in nucleotide-sugar biosynthesis; UDP-N-acetyl-alpha-D-glucosamine biosynthesis; N-acetyl-alpha-D-glucosamine 1-phosphate from alpha-D-glucosamine 6-phosphate (route II): step 2/2. It functions in the pathway nucleotide-sugar biosynthesis; UDP-N-acetyl-alpha-D-glucosamine biosynthesis; UDP-N-acetyl-alpha-D-glucosamine from N-acetyl-alpha-D-glucosamine 1-phosphate: step 1/1. Its pathway is bacterial outer membrane biogenesis; LPS lipid A biosynthesis. Catalyzes the last two sequential reactions in the de novo biosynthetic pathway for UDP-N-acetylglucosamine (UDP-GlcNAc). The C-terminal domain catalyzes the transfer of acetyl group from acetyl coenzyme A to glucosamine-1-phosphate (GlcN-1-P) to produce N-acetylglucosamine-1-phosphate (GlcNAc-1-P), which is converted into UDP-GlcNAc by the transfer of uridine 5-monophosphate (from uridine 5-triphosphate), a reaction catalyzed by the N-terminal domain. In Lawsonia intracellularis (strain PHE/MN1-00), this protein is Bifunctional protein GlmU.